A 108-amino-acid chain; its full sequence is DNA-directed RNA polymerase III subunit RPC10 (108 aa).

The Zn(2+) site is built by C5, C8, C25, C28, C69, and C72. The C4-type zinc finger occupies 5 to 28 (CPGCGNGLIVEEGQRCHRFACNTC). A TFIIS-type zinc finger spans residues 65–107 (TAESCPKCEHPRAYFMQLQTRSADEPMTTFYKCCNAQCGHRWR). The Hairpin signature appears at 88 to 89 (DE). Zn(2+)-binding residues include C98 and C102.

Belongs to the archaeal RpoM/eukaryotic RPA12/RPB9/RPC11 RNA polymerase family. Component of the RNA polymerase III complex consisting of 17 subunits: a ten-subunit horseshoe-shaped catalytic core composed of POLR3A/RPC1, POLR3B/RPC2, POLR1C/RPAC1, POLR1D/RPAC2, POLR3K/RPC10, POLR2E/RPABC1, POLR2F/RPABC2, POLR2H/RPABC3, POLR2K/RPABC4 and POLR2L/RPABC5; a mobile stalk composed of two subunits POLR3H/RPC8 and CRCP/RPC9, protruding from the core and functioning primarily in transcription initiation; and additional subunits homologous to general transcription factors of the RNA polymerase II machinery, POLR3C/RPC3-POLR3F/RPC6-POLR3G/RPC7 heterotrimer required for transcription initiation and POLR3D/RPC4-POLR3E/RPC5 heterodimer involved in both transcription initiation and termination.

The protein localises to the nucleus. Functionally, core component of RNA polymerase III (Pol III) which synthesizes small non-coding RNAs using the four ribonucleoside triphosphates as substrates. Can mediate Pol I proofreading of the nascent RNA transcript. Anchors into the Pol III active site to constantly monitor transcription fidelity, cleaves mis-incorporated 5'-ribonucleotides and restarts the transcription process. Once Pol III reaches the poly(dT) termination signal, can induce Pol III clamp opening and transcription termination. Pol III plays an important role in sensing and limiting infection by intracellular bacteria and DNA viruses. Acts as a nuclear and cytosolic DNA sensor involved in innate immune response. Can sense non-self dsDNA that serves as template for transcription into dsRNA. The non-self RNA polymerase III transcripts, such as Epstein-Barr virus-encoded RNAs (EBERs) induce type I interferon and NF-kappa-B through the RIG-I pathway. The sequence is that of DNA-directed RNA polymerase III subunit RPC10 from Homo sapiens (Human).